The sequence spans 1122 residues: Histone deacetylase 5 (1122 aa).

Residues 1–24 (MNSPNESDGMSGREPSLEILPRTS) are disordered. A Glycyl lysine isopeptide (Lys-Gly) (interchain with G-Cter in SUMO2) cross-link involves residue lysine 35. Disordered regions lie at residues 41–60 (AMPSSMGGGGGGSPSPVELR) and 196–281 (KEPT…SSPL). Positions 247-258 (DSRDDFPLRKTA) are enriched in basic and acidic residues. Serine 259 carries the phosphoserine; by AMPK, CaMK1, SIK1 and PKD/PRKD1 modification. Positions 272-281 (KVAERRSSPL) are enriched in basic and acidic residues. Threonine 292 bears the Phosphothreonine; by PKC mark. Disordered stretches follow at residues 302 to 343 (GAGP…NIPT) and 481 to 504 (MRTVGKLPRHRPLSRTQSSPLPQS). Positions 312–327 (NSAPGSGPSSPNSSHS) are enriched in low complexity. A compositionally biased stretch (polar residues) spans 328–340 (TIAENGFTGSVPN). The span at 494-504 (SRTQSSPLPQS) shows a compositional bias: low complexity. A Phosphoserine; by AMPK, CaMK1, SIK1 and PKD/PRKD1 modification is found at serine 498. N6-acetyllysine is present on lysine 533. Positions 536–625 (TKTGELPRQP…GPDLEEPGAG (90 aa)) are disordered. Acidic residues predominate over residues 581 to 621 (STQEDLEEEDEEDDGEEEEDCIQVKDEEGESGAEEGPDLEE). Phosphoserine is present on residues serine 611 and serine 661. Positions 684–1028 (GVVYDTFMLK…VSALLSVELQ (345 aa)) are histone deacetylase. Cysteine 696, cysteine 698, histidine 704, and cysteine 781 together coordinate Zn(2+). Histidine 833 is an active-site residue. Positions 1081–1122 (EEAETVSAMALLSVGAEQAQAAAAREHSPRPAEEPMEQEPAL) match the Nuclear export signal motif. The interval 1097–1122 (EQAQAAAAREHSPRPAEEPMEQEPAL) is disordered. Residues 1104–1113 (AREHSPRPAE) are compositionally biased toward basic and acidic residues. Serine 1108 is modified (phosphoserine).

It belongs to the histone deacetylase family. HD type 2 subfamily. Interacts with AHRR, BAHD1, BCOR, HDAC7, HDAC9, CTBP1, MEF2C, NCOR2, NRIP1, PHB2 and a 14-3-3 chaperone protein. Interacts with BCL6, DDIT3/CHOP, GRK5, KDM5B and MYOCD. Interacts with EP300 in the presence of TFAP2C. Interacts with ANKRA2. Interacts with CUL7 (as part of the 3M complex); negatively regulated by ANKRA2. Interacts with ZBTB7B; the interaction allows the recruitment of HDAC4 on CD8 loci for deacetylation and possible inhibition of CD8 genes expression. Interacts with RARA. Phosphorylated by AMPK, CaMK1, SIK1 and PRKD1 at Ser-259 and Ser-498. The phosphorylation is required for the export to the cytoplasm and inhibition. Phosphorylated by the PKC kinases PKN1 and PKN2, impairing nuclear import. Phosphorylated by GRK5, leading to nuclear export of HDAC5 and allowing MEF2-mediated transcription. Post-translationally, ubiquitinated. Polyubiquitination however does not lead to its degradation. As to expression, ubiquitous.

The protein resides in the nucleus. It is found in the cytoplasm. It carries out the reaction N(6)-acetyl-L-lysyl-[histone] + H2O = L-lysyl-[histone] + acetate. Its function is as follows. Responsible for the deacetylation of lysine residues on the N-terminal part of the core histones (H2A, H2B, H3 and H4). Histone deacetylation gives a tag for epigenetic repression and plays an important role in transcriptional regulation, cell cycle progression and developmental events. Histone deacetylases act via the formation of large multiprotein complexes. Involved in muscle maturation by repressing transcription of myocyte enhancer MEF2C. During muscle differentiation, it shuttles into the cytoplasm, allowing the expression of myocyte enhancer factors. Involved in the MTA1-mediated epigenetic regulation of ESR1 expression in breast cancer. Serves as a corepressor of RARA and causes its deacetylation. In association with RARA, plays a role in the repression of microRNA-10a and thereby in the inflammatory response. This Homo sapiens (Human) protein is Histone deacetylase 5 (HDAC5).